We begin with the raw amino-acid sequence, 1106 residues long: Protein shuttle craft (1106 aa).

2 disordered regions span residues 7-26 and 189-371; these read QLTNGAGEAGPGNESSAMAD and PAAA…KLSQ. A compositionally biased stretch (low complexity) spans 189–201; the sequence is PAAATTNGNSTAS. 2 stretches are compositionally biased toward basic and acidic residues: residues 232 to 270 and 278 to 323; these read NYERERERERDRDRDRERDRDRDRDRDRDRDRDRDRDSR and RRSD…RDRI. Phosphothreonine is present on Thr-335. A phosphoserine mark is found at Ser-336, Ser-339, Ser-343, and Ser-354. The segment covering 336–354 has biased composition (polar residues); sequence SNESAHPSPEKQSQLQQIS. Residues 386 to 433 form an RING-type; atypical zinc finger; that stretch reads CLVCVEAIKSHQPTWSCRNCYHMLHLKCTITWASSSKSEVGWRCPACQ. 8 consecutive NF-X1-type zinc fingers follow at residues 474–492, 527–546, 585–604, 644–667, 706–725, 733–752, 844–867, and 876–896; these read CSHACTLLCHPGPCPPCQA, CGEHRCQAECHSGKCAACSE, CGHHKCKDSCHAGSCRPCKL, CGKPAHPHQCGSKCHLGQCPPCPK, CGKHKCNVECCIDIDHDCPL, CGKHKCDQPCHRGNCPPCYR, CGGHKCIKPCHEGPCQSAGEICRQ, and CGHKCAAACHEGACPETPCKE. The R3H domain occupies 1006–1071; that stretch reads TKSVYETLTD…NRNVVATAHK (66 aa).

It belongs to the NFX1 family. Ovaries and embryonic central nervous system.

It localises to the nucleus. Its function is as follows. Plays an essential role during the late stages of embryonic neurogenesis. May either fine-tune the guidance or the spatial maintenance of the migrating SNB and in nerve roots, which are composed of axons originating from distinct groups of motor neurons and may be required to either guide or maintain the position of these nerves along a direct and straight path to their ultimate targets in particular muscle fields. May play a role in egg chamber development and/or may confer essential maternal contributions to the early embryo. In Drosophila melanogaster (Fruit fly), this protein is Protein shuttle craft (stc).